The primary structure comprises 399 residues: Elongation factor Tu (399 aa).

The 195-residue stretch at 10 to 204 (KPHVNIGTIG…SVDESIPEPE (195 aa)) folds into the tr-type G domain. Positions 19–26 (GHVDHGKT) are G1. 19 to 26 (GHVDHGKT) provides a ligand contact to GTP. Thr26 is a binding site for Mg(2+). Residues 60-64 (GITIN) are G2. The G3 stretch occupies residues 81–84 (DCPG). GTP contacts are provided by residues 81–85 (DCPGH) and 136–139 (NKCD). The tract at residues 136 to 139 (NKCD) is G4. Residues 174–176 (SAL) are G5.

Belongs to the TRAFAC class translation factor GTPase superfamily. Classic translation factor GTPase family. EF-Tu/EF-1A subfamily. Monomer.

The protein resides in the cytoplasm. It catalyses the reaction GTP + H2O = GDP + phosphate + H(+). GTP hydrolase that promotes the GTP-dependent binding of aminoacyl-tRNA to the A-site of ribosomes during protein biosynthesis. The polypeptide is Elongation factor Tu (Prochlorococcus marinus (strain MIT 9211)).